A 490-amino-acid polypeptide reads, in one-letter code: 4-hydroxyphenylacetaldehyde synthase (490 aa).

Pro-97, His-198, and His-313 together coordinate L-phenylalanine. Residue Lys-314 is modified to N6-(pyridoxal phosphate)lysine. Position 343 (Phe-343) interacts with L-phenylalanine.

This sequence belongs to the group II decarboxylase family. As to quaternary structure, homodimer. The cofactor is pyridoxal 5'-phosphate.

The catalysed reaction is L-tyrosine + O2 + H2O + H(+) = (4-hydroxyphenyl)acetaldehyde + H2O2 + NH4(+) + CO2. Functionally, catalyzes the production of 4-hydroxyphenylacetaldehyde (HPAA) directly from L-tyrosine, tyramine not being formed as an intermediate. The protein is 4-hydroxyphenylacetaldehyde synthase of Rhodiola rosea (Roseroot).